The chain runs to 513 residues: Histidine ammonia-lyase (513 aa).

Positions 142-144 (ASG) form a cross-link, 5-imidazolinone (Ala-Gly). 2,3-didehydroalanine (Ser) is present on Ser-143.

The protein belongs to the PAL/histidase family. In terms of processing, contains an active site 4-methylidene-imidazol-5-one (MIO), which is formed autocatalytically by cyclization and dehydration of residues Ala-Ser-Gly.

The protein resides in the cytoplasm. It catalyses the reaction L-histidine = trans-urocanate + NH4(+). It functions in the pathway amino-acid degradation; L-histidine degradation into L-glutamate; N-formimidoyl-L-glutamate from L-histidine: step 1/3. The sequence is that of Histidine ammonia-lyase from Hyphomonas neptunium (strain ATCC 15444).